Here is a 172-residue protein sequence, read N- to C-terminus: Neuropeptide-like protein nlp-8 (172 aa).

A signal peptide spans methionine 1 to alanine 26.

In terms of processing, may be processed by convertase egl-3.

It is found in the secreted. Its function is as follows. Neuropeptide-like protein. Plays a role in behaviors associated with a sleep-like state induced by stress (SIS), acting in concert with the FARP (FMRFamide related) peptides, flp-13 and flp-24. This Caenorhabditis elegans protein is Neuropeptide-like protein nlp-8.